Here is a 430-residue protein sequence, read N- to C-terminus: Dihydroorotase (430 aa).

Residues histidine 57 and histidine 59 each coordinate Zn(2+). Substrate-binding positions include 59–61 (HLR) and asparagine 91. The Zn(2+) site is built by aspartate 151, histidine 178, and histidine 231. Asparagine 277 serves as a coordination point for substrate. Aspartate 304 is a Zn(2+) binding site. Aspartate 304 is an active-site residue. Residues histidine 308 and 322–323 (PG) each bind substrate.

The protein belongs to the metallo-dependent hydrolases superfamily. DHOase family. Class I DHOase subfamily. The cofactor is Zn(2+).

It carries out the reaction (S)-dihydroorotate + H2O = N-carbamoyl-L-aspartate + H(+). It participates in pyrimidine metabolism; UMP biosynthesis via de novo pathway; (S)-dihydroorotate from bicarbonate: step 3/3. Its function is as follows. Catalyzes the reversible cyclization of carbamoyl aspartate to dihydroorotate. The polypeptide is Dihydroorotase (Mycobacterium bovis (strain ATCC BAA-935 / AF2122/97)).